The primary structure comprises 670 residues: Lebercilin-like protein (670 aa).

A disordered region spans residues 30–51 (KRSPGTGDFSRNSNASNKSVDY). Positions 38–51 (FSRNSNASNKSVDY) are enriched in polar residues. Coiled coils occupy residues 148 to 259 (LHKI…EREE) and 305 to 336 (AAQTATKTLQVEVKHLQQKLKEKDRELEIKNI). Positions 374 to 393 (HQGTQKSDVPPLTTKGKKAT) are disordered. A coiled-coil region spans residues 420-440 (EDSKRKYEDLSGEEKHLEVQI). Disordered regions lie at residues 495–516 (RSMQRNGVDDTLGKGTAPYTKG), 557–580 (KHLSNREEMELEHSDSGYEPSFGK), and 609–670 (LKTD…KIII). Basic and acidic residues-rich tracts occupy residues 560 to 572 (SNREEMELEHSDS) and 621 to 632 (GSEEPLQSKESH). Residues 651–662 (TVVNSIKPSSPT) show a composition bias toward polar residues.

This sequence belongs to the LCA5 family.

This is Lebercilin-like protein (LCA5L) from Homo sapiens (Human).